The following is a 310-amino-acid chain: Regulator of microtubule dynamics protein 1 (310 aa).

Lys-165 bears the N6-succinyllysine mark. TPR repeat units follow at residues 168–204 and 222–258; these read AICISDVGDYEGIKVKIANAYVIKEHFEKAIELNPKD and PWYQRRIAEVLFANPPSSTYEEALKYFHRAEEVDPNF.

This sequence belongs to the RMDN family. As to quaternary structure, interacts with microtubules.

The protein localises to the cytoplasm. The protein resides in the cytoskeleton. It localises to the spindle. Its subcellular location is the spindle pole. The protein is Regulator of microtubule dynamics protein 1 (Rmdn1) of Rattus norvegicus (Rat).